The following is a 215-amino-acid chain: Ribonuclease T (215 aa).

The Exonuclease domain maps to 20-194 (VVIDVETAGF…YDTERTAVLF (175 aa)). Mg(2+)-binding residues include Asp-23, Glu-25, His-181, and Asp-186. The active-site Proton donor/acceptor is the His-181.

It belongs to the RNase T family. As to quaternary structure, homodimer. Mg(2+) is required as a cofactor.

Functionally, trims short 3' overhangs of a variety of RNA species, leaving a one or two nucleotide 3' overhang. Responsible for the end-turnover of tRNA: specifically removes the terminal AMP residue from uncharged tRNA (tRNA-C-C-A). Also appears to be involved in tRNA biosynthesis, especially in strains lacking other exoribonucleases. In terms of biological role, a general regulator of small RNAs (sRNA), contributes to their degradation. Upon overexpression suppresses sRNA-mediated RhyB-silencing of multiple RNA targets; overexpression leads to nearly complete loss of RhyB sRNA. The polypeptide is Ribonuclease T (Escherichia coli (strain K12)).